Consider the following 444-residue polypeptide: Cysteine proteinase 2 (444 aa).

The or 27 signal peptide spans 1–19 (MATSRAALCAVAVVCVVLA). The propeptide at 20-124 (AACAPARAIH…HYRKARADLS (105 aa)) is activation peptide. A disulfide bond links cysteine 147 and cysteine 188. Residue cysteine 150 is part of the active site. Asparagine 228 carries N-linked (GlcNAc...) asparagine glycosylation. Residues histidine 289 and asparagine 309 contribute to the active site. Asparagine 372 is a glycosylation site (N-linked (GlcNAc...) asparagine).

The protein belongs to the peptidase C1 family.

The protein resides in the lysosome. In terms of biological role, the cysteine proteinases have a potential role in host-parasite interaction and virulence. This chain is Cysteine proteinase 2 (CYS2), found in Leishmania pifanoi.